The sequence spans 336 residues: Tetraacyldisaccharide 4'-kinase (336 aa).

58-65 (AVGGSGKT) provides a ligand contact to ATP.

It belongs to the LpxK family.

The catalysed reaction is a lipid A disaccharide + ATP = a lipid IVA + ADP + H(+). It functions in the pathway glycolipid biosynthesis; lipid IV(A) biosynthesis; lipid IV(A) from (3R)-3-hydroxytetradecanoyl-[acyl-carrier-protein] and UDP-N-acetyl-alpha-D-glucosamine: step 6/6. In terms of biological role, transfers the gamma-phosphate of ATP to the 4'-position of a tetraacyldisaccharide 1-phosphate intermediate (termed DS-1-P) to form tetraacyldisaccharide 1,4'-bis-phosphate (lipid IVA). This chain is Tetraacyldisaccharide 4'-kinase, found in Aromatoleum aromaticum (strain DSM 19018 / LMG 30748 / EbN1) (Azoarcus sp. (strain EbN1)).